Consider the following 1923-residue polypeptide: Callose synthase 5 (1923 aa).

A compositionally biased stretch (polar residues) spans 1–10 (MAQSSTSHDS). Residues 1–22 (MAQSSTSHDSGPQGLMRRPSRS) are disordered. At 1–481 (MAQSSTSHDS…ETRTFWHIYH (481 aa)) the chain is on the cytoplasmic side. Residues 482–502 (SFDRLWTFYLLALQAMIILAF) traverse the membrane as a helical segment. The Extracellular portion of the chain corresponds to 503-521 (ERVELREILRKDVLYALSS). The helical transmembrane segment at 522–542 (IFITAAFLRFLQSVLDVILNF) threads the bilayer. Over 543 to 559 (PGFHRWKFTDVLRNILK) the chain is Cytoplasmic. The chain crosses the membrane as a helical span at residues 560 to 580 (IVVSLAWCVVLPLCYAQSVSF). Residues 581 to 601 (APGKLKQWLSFLPQVKGVPPL) lie on the Extracellular side of the membrane. The chain crosses the membrane as a helical span at residues 602 to 622 (YIMAVALYLLPNVLAAIMFIF). The Cytoplasmic segment spans residues 623–658 (PMLRRWIENSDWHIFRLLLWWSQPRIYVGRGMHESQ). A helical membrane pass occupies residues 659–679 (IALIKYTIFWLLLFCCKFAFS). The Extracellular portion of the chain corresponds to 680–719 (YFLQVKLLVKPTNAIMSIRHVKYKWHEFFPNAEHNYGAVV). Residues 720–740 (SLWLPVILVYFMDTQIWYAIF) form a helical membrane-spanning segment. At 741–1486 (STICGGVIGA…FDFFRMMSCY (746 aa)) the chain is on the cytoplasmic side. Residues 1487–1507 (FTTVGFYISSMIVVLTVYAFL) traverse the membrane as a helical segment. Residues 1508-1535 (YGRLYLSLSGVEEAIVKFAAAKGDSSLK) lie on the Extracellular side of the membrane. The helical transmembrane segment at 1536–1556 (AAMASQSVVQLGLLMTLPMVM) threads the bilayer. Residues 1557-1566 (EIGLERGFRT) lie on the Cytoplasmic side of the membrane. The chain crosses the membrane as a helical span at residues 1567-1587 (ALSDLIIMQLQLAPVFFTFSL). Topologically, residues 1588-1630 (GTKVHYYGRTILHGGSKYRATGRGFVVKHEKFAENYRMYSRSH) are extracellular. The helical transmembrane segment at 1631 to 1651 (FVKGMELMVLLICYRIYGKAA) threads the bilayer. At 1652–1657 (EDSVGY) the chain is on the cytoplasmic side. A helical membrane pass occupies residues 1658–1678 (ALVMGSTWFLVGSWLFAPFFF). The Extracellular portion of the chain corresponds to 1679-1732 (NPSGFEWQKIVDDWDDWNKWISSRGGIGVPANKSWESWWEEEQEHLLHSGFFGK). The N-linked (GlcNAc...) asparagine glycan is linked to Asn-1710. A helical transmembrane segment spans residues 1733 to 1755 (FWEIFLSLRYFIYQYGIVYQLNL). Residues 1756 to 1766 (TKESRMGKQHS) lie on the Cytoplasmic side of the membrane. Residues 1767-1787 (IIVYGLSWLVIVAVMIVLKIV) form a helical membrane-spanning segment. Residues 1788–1803 (SMGRKKFSADFQLMFR) are Extracellular-facing. Residues 1804–1824 (LLKLFLFIGSVVIVGMLFHFL) form a helical membrane-spanning segment. Lys-1825 is a topological domain (cytoplasmic). Residues 1826–1846 (LTVGDIMQSLLAFLPTGWALL) form a helical membrane-spanning segment. Residues 1847–1873 (QISQVARPLMKTVGMWGSVKALARGYE) are Extracellular-facing. A helical transmembrane segment spans residues 1874–1894 (YIMGVVIFMPVTVLAWFPFVS). At 1895–1923 (EFQTRLLFNQAFSRGLQIQRILAGGKKQK) the chain is on the cytoplasmic side.

Belongs to the glycosyltransferase 48 family.

It localises to the cell membrane. It catalyses the reaction [(1-&gt;3)-beta-D-glucosyl](n) + UDP-alpha-D-glucose = [(1-&gt;3)-beta-D-glucosyl](n+1) + UDP + H(+). Required for the formation of the callose wall separating the tetraspores (interstitial wall) and surrounding the pollen mother cells (peripheral wall). Required for exine formation on pollen wall. May be involved in callose synthesis during pollen tube growth. During plant growth and development, callose is found as a transitory component of the cell plate in dividing cells, is a major component of pollen mother cell walls and pollen tubes, and is found as a structural component of plasmodesmatal canals. In Arabidopsis thaliana (Mouse-ear cress), this protein is Callose synthase 5 (CALS5).